The following is a 301-amino-acid chain: Formylmethanofuran--tetrahydromethanopterin formyltransferase (301 aa).

The protein belongs to the FTR family. In terms of assembly, homotetramer.

It localises to the cytoplasm. The catalysed reaction is N-formylmethanofuran + 5,6,7,8-tetrahydromethanopterin + H(+) = N(5)-formyl-5,6,7,8-tetrahydromethanopterin + methanofuran. It functions in the pathway one-carbon metabolism; methanogenesis from CO(2); 5,10-methenyl-5,6,7,8-tetrahydromethanopterin from CO(2): step 2/3. In terms of biological role, catalyzes the reversible transfer of a formyl group from formylmethanofuran (formyl-MFR) to tetrahydromethanopterin (H(4)MPT) to produce 5-formyl tetrahydromethanopterin (5-formyl-H(4)MPT) and methanofuran (MFR). The sequence is that of Formylmethanofuran--tetrahydromethanopterin formyltransferase from Methanocaldococcus jannaschii (strain ATCC 43067 / DSM 2661 / JAL-1 / JCM 10045 / NBRC 100440) (Methanococcus jannaschii).